Here is a 493-residue protein sequence, read N- to C-terminus: UDP-glucose 6-dehydrogenase (493 aa).

NAD(+)-binding positions include 11-16 (GAGYVG), aspartate 36, arginine 41, and 89-93 (VNTPT). Residues 88–110 (SVNTPTKTYGMGKGRAADLKYIE) form a disordered region. Position 107 is an N6-acetyllysine (lysine 107). The allosteric switch region stretch occupies residues 129–135 (KSTVPVR). 130–132 (STV) contacts NAD(+). Glutamate 161 serves as the catalytic Proton donor/acceptor. Residues 161–165 (EFLAE), 220–224 (KLAAN), arginine 260, and 267–273 (KASVGFG) contribute to the substrate site. Residue glutamate 165 coordinates NAD(+). The active-site Proton donor/acceptor is the lysine 220. The active-site Nucleophile is cysteine 276. Residue 276-279 (CFQK) participates in NAD(+) binding. The interval 321–325 (SLFNT) is important for formation of active hexamer structure. Residue 338-339 (FK) coordinates substrate. Arginine 346 provides a ligand contact to NAD(+). Arginine 442 is a substrate binding site. The tract at residues 466 to 493 (VSSKRIPYTPGEIPKFSLQDPPNKKPKV) is disordered. A Phosphothreonine modification is found at threonine 474.

Belongs to the UDP-glucose/GDP-mannose dehydrogenase family. Homohexamer.

It catalyses the reaction UDP-alpha-D-glucose + 2 NAD(+) + H2O = UDP-alpha-D-glucuronate + 2 NADH + 3 H(+). Its pathway is nucleotide-sugar biosynthesis; UDP-alpha-D-glucuronate biosynthesis; UDP-alpha-D-glucuronate from UDP-alpha-D-glucose: step 1/1. With respect to regulation, UDP-alpha-D-xylose (UDX) acts as a feedback inhibitor. It binds at the same site as the substrate, but functions as allosteric inhibitor by triggering a conformation change that disrupts the active hexameric ring structure and gives rise to an inactive, horseshoe-shaped hexamer. In terms of biological role, catalyzes the formation of UDP-alpha-D-glucuronate, a constituent of complex glycosaminoglycans. Required for the biosynthesis of chondroitin sulfate and heparan sulfate. Required for embryonic development via its role in the biosynthesis of glycosaminoglycans. Required for proper brain and neuronal development. The sequence is that of UDP-glucose 6-dehydrogenase (Ugdh) from Rattus norvegicus (Rat).